A 257-amino-acid chain; its full sequence is Neurotrophin-3 (257 aa).

The signal sequence occupies residues 1 to 18 (MSILFYMIFLAYLRGIQG). A propeptide spanning residues 19 to 138 (NSMDQRRLPE…VANRTARRKR (120 aa)) is cleaved from the precursor. The disordered stretch occupies residues 61–81 (STLPKAEAPREPERGEPAKSE). Residues 67–79 (EAPREPERGEPAK) show a composition bias toward basic and acidic residues. Asn131 is a glycosylation site (N-linked (GlcNAc...) asparagine). 3 disulfides stabilise this stretch: Cys152–Cys217, Cys195–Cys246, and Cys205–Cys248.

It belongs to the NGF-beta family.

It is found in the secreted. Seems to promote the survival of visceral and proprioceptive sensory neurons. This is Neurotrophin-3 (NTF3) from Sus scrofa (Pig).